The following is a 205-amino-acid chain: MIDPDGFRPNVGIVLMREDGQVFWARRVRRDGWQFPQGGMNTDETPVEAMYRELREETGLLPEHVELLGATPGWLRYRLPSRAVRRNERQVCIGQKQVWFLLQFTGQESHLKLDHTDSPEFDHWRWVDFWYPVEHVVMFKRGVYARALRHLAPLAQTVAGPAAVGVMPQRALEAWLPGSSAAGHDRPRKRPRKRGGVLPVRINND.

The Nudix hydrolase domain occupies 6–149 (GFRPNVGIVL…KRGVYARALR (144 aa)). Positions 38–59 (GGMNTDETPVEAMYRELREETG) match the Nudix box motif. The disordered stretch occupies residues 178-205 (GSSAAGHDRPRKRPRKRGGVLPVRINND). Residues 186 to 195 (RPRKRPRKRG) are compositionally biased toward basic residues.

It belongs to the Nudix hydrolase family. RppH subfamily. The cofactor is a divalent metal cation.

Functionally, accelerates the degradation of transcripts by removing pyrophosphate from the 5'-end of triphosphorylated RNA, leading to a more labile monophosphorylated state that can stimulate subsequent ribonuclease cleavage. This is RNA pyrophosphohydrolase from Xanthomonas campestris pv. campestris (strain 8004).